A 284-amino-acid polypeptide reads, in one-letter code: MSASLIKGSDVAKEIRSDLQKDVEDLKSQGVTPHLAVVLVGEDSASQTYVNMKEKTAGKVGIESTVKRLPTNVEEDELLRLIDELNKDDSVHGILVQLPLPYHIDEYKILNAIDQYKDVDSFHPVNVGNLTIGQKRFTPCTPAGIMKLLDSIDYDLNGKHAVVLGRSNIVGKPISLLLLERNATVSICHSRTKDLTEMTKSADLLIVAVGRPEIVTGKMIKPGAVVIDVGVNKVDDKLIGDVEFESAKEVAGWITPVPGGVGPMTITMLLNNTIEAARRCLNEQ.

Residues 165–167, Ser-190, and Val-231 each bind NADP(+); that span reads GRS.

Belongs to the tetrahydrofolate dehydrogenase/cyclohydrolase family. As to quaternary structure, homodimer.

The enzyme catalyses (6R)-5,10-methylene-5,6,7,8-tetrahydrofolate + NADP(+) = (6R)-5,10-methenyltetrahydrofolate + NADPH. It catalyses the reaction (6R)-5,10-methenyltetrahydrofolate + H2O = (6R)-10-formyltetrahydrofolate + H(+). Its pathway is one-carbon metabolism; tetrahydrofolate interconversion. Its function is as follows. Catalyzes the oxidation of 5,10-methylenetetrahydrofolate to 5,10-methenyltetrahydrofolate and then the hydrolysis of 5,10-methenyltetrahydrofolate to 10-formyltetrahydrofolate. This Natranaerobius thermophilus (strain ATCC BAA-1301 / DSM 18059 / JW/NM-WN-LF) protein is Bifunctional protein FolD.